Here is a 620-residue protein sequence, read N- to C-terminus: Glutathione-regulated potassium-efflux system protein KefC (620 aa).

12 helical membrane passes run 4–24 (HTLLQALIYLGSAALIVPIAV), 26–46 (LGLGSVLGYLIAGCIIGPWGL), 54–74 (SILHFAEIGVVLMLFVIGLEL), 90–110 (GALQMVVCGGLIGLFCMFLGL), 114–134 (VAELIGMTLALSSTAIAMQAM), 149–169 (FAVLLFQDIAAIPLVAMIPLL), 178–198 (LGAFALSALKVAGALALVVLL), 218–238 (VFSAVALFLVFGFGLLLEEVG), 270–290 (GLLLGLFFIGVGMSIDFGTLV), 294–314 (LRILLLLAGFLAIKIVMLWLV), 327–347 (WFAVLLGQGSEFAFVVFGAAQ), and 359–379 (ALTLAVALSMAATPIFLVLLT). One can recognise an RCK N-terminal domain in the interval 399–518 (QPRVIVAGFG…AGVAMPERET (120 aa)). Positions 599-620 (QGTAEGKHSGEAADEPEVKPSI) are disordered.

It belongs to the monovalent cation:proton antiporter 2 (CPA2) transporter (TC 2.A.37) family. KefC subfamily. In terms of assembly, homodimer. Interacts with the regulatory subunit KefF.

Its subcellular location is the cell inner membrane. Pore-forming subunit of a potassium efflux system that confers protection against electrophiles. Catalyzes K(+)/H(+) antiport. This is Glutathione-regulated potassium-efflux system protein KefC from Salmonella dublin (strain CT_02021853).